The following is a 373-amino-acid chain: Mitochondrial fission regulator 2 (373 aa).

Ser-136 bears the Phosphoserine mark. Residues 151-179 (VSEAAIKKIAALEDELTSLRAQIAAIVAM) are a coiled coil. 2 disordered regions span residues 189-331 (GFIS…WDPV) and 346-373 (DDSFDSENRSWQGSPFSSPETSRNGSRF). Pro residues predominate over residues 224–239 (SPPPLPPPPPPLPPPQ). Composition is skewed to basic and acidic residues over residues 275-287 (KKTDGSHHSESQR) and 297-310 (VLKDMNKVKLRPVE). Ser-312 and Ser-348 each carry phosphoserine. The span at 354–373 (RSWQGSPFSSPETSRNGSRF) shows a compositional bias: polar residues.

This sequence belongs to the MTFR1 family.

It is found in the mitochondrion. Functionally, may play a role in mitochondrial aerobic respiration essentially in the testis. Can also promote mitochondrial fission. The sequence is that of Mitochondrial fission regulator 2 (Mtfr2) from Rattus norvegicus (Rat).